We begin with the raw amino-acid sequence, 957 residues long: MTQTLSQLENSGAFIERHIGPDAGQQQEMLNAVSAESLNALIGQIVPKDIQLANPPQVGEAATEYAALAELKAIVGRNKRFTSYIGMGYTAVQLPPVILRNMLENPGWYTAYTPYQPEVSQGRLEALLNFQQVTLDLTGLDMASASLLDEATAAAEAMAMAKRVSKLKNANRFFVASDVHPQTLDVVRTRAKTFGFDVIVDDAAKALDHQNVFGVLLQQVGSTGEIHDYSALISKLKARKVIVSVAADFMALVLLTAPGKQGADIVFGSAQRFGVPMGYGGPHAAFFAAIDEFKRSMPGRIIGVSKDAAGNAALRMAMQTREQHIRREKANSNICTSQVLLANIASLYAVYHGPVGLKRIAQRIHRLTDILAAGLQQKGLKLRHAHYFDTLCVEVADKAAVLARAEAAEINLRSDIHNAVGITLDETTTRDNVLQLFTILLGDDHGLNIETLDKDVALDSRSIQQSMLRDDAVLTHPVFNRYHSETEMMRYMHSLERKDLALNQAMIPLGSCTMKLNAAAEMIPITWPEFAELHPFCPPEQAEGYQQMISQLSDWLVKLTGYDAVCMQPNSGAQGEYAGLLAIRHYHESRNEGHRDICLIPASAHGTNPASAHMAGMQVVVVACDKNGNIDLADLRAKAELHANNLSCIMVTYPSTHGVYEETIRDVCDIVHQFGGQVYLDGANMNAQVGITSPGFIGADVSHLNLHKTFCIPHGGGGPGMGPIGVKAHLAPFVPGHSVVQIEGMLTRQGAVSAAPFGSASILPISWMYIRMMGAEGLKQASQVAILNANYIASRLKDAYPILYTGRDGRVAHECILDIRPLKEETGISELDIAKRLIDYGFHAPTMSFPVAGTLMVEPTESEGKAELDRFINAMLAIRAEIERVKAGEWPLEDNPLVNAPHTQNELAAEWNHSYSREVAVFPAGVANKYWPTVKRLDDVYGDRNLFCSCVPMSEYQ.

Lys708 carries the post-translational modification N6-(pyridoxal phosphate)lysine.

Belongs to the GcvP family. The glycine cleavage system is composed of four proteins: P, T, L and H. Pyridoxal 5'-phosphate is required as a cofactor.

The catalysed reaction is N(6)-[(R)-lipoyl]-L-lysyl-[glycine-cleavage complex H protein] + glycine + H(+) = N(6)-[(R)-S(8)-aminomethyldihydrolipoyl]-L-lysyl-[glycine-cleavage complex H protein] + CO2. In terms of biological role, the glycine cleavage system catalyzes the degradation of glycine. The P protein binds the alpha-amino group of glycine through its pyridoxal phosphate cofactor; CO(2) is released and the remaining methylamine moiety is then transferred to the lipoamide cofactor of the H protein. In Salmonella arizonae (strain ATCC BAA-731 / CDC346-86 / RSK2980), this protein is Glycine dehydrogenase (decarboxylating).